Reading from the N-terminus, the 113-residue chain is Hydrogenase maturation factor HypA (113 aa).

Residue His2 participates in Ni(2+) binding. Positions 73, 76, 89, and 92 each coordinate Zn(2+).

It belongs to the HypA/HybF family.

In terms of biological role, involved in the maturation of [NiFe] hydrogenases. Required for nickel insertion into the metal center of the hydrogenase. The chain is Hydrogenase maturation factor HypA from Azotobacter chroococcum mcd 1.